Reading from the N-terminus, the 62-residue chain is Large ribosomal subunit protein bL28 (62 aa).

It belongs to the bacterial ribosomal protein bL28 family.

The sequence is that of Large ribosomal subunit protein bL28 from Moorella thermoacetica (strain ATCC 39073 / JCM 9320).